An 83-amino-acid polypeptide reads, in one-letter code: MAHKKSGGVAKNGRDSLPKYLGVKVGDGQFVKAGNILVRQRGTRFHPGKNVGMGRDFTLFALKDGRVKFEQKNNKKYVSVYEE.

Belongs to the bacterial ribosomal protein bL27 family.

The chain is Large ribosomal subunit protein bL27 from Thermotoga neapolitana (strain ATCC 49049 / DSM 4359 / NBRC 107923 / NS-E).